The chain runs to 200 residues: Small ribosomal subunit protein uS4 (200 aa).

Residues Ser-94–Val-157 form the S4 RNA-binding domain.

This sequence belongs to the universal ribosomal protein uS4 family. Part of the 30S ribosomal subunit. Contacts protein S5. The interaction surface between S4 and S5 is involved in control of translational fidelity.

In terms of biological role, one of the primary rRNA binding proteins, it binds directly to 16S rRNA where it nucleates assembly of the body of the 30S subunit. Its function is as follows. With S5 and S12 plays an important role in translational accuracy. The chain is Small ribosomal subunit protein uS4 from Metamycoplasma arthritidis (strain 158L3-1) (Mycoplasma arthritidis).